Consider the following 129-residue polypeptide: Histone H2B.2 (129 aa).

Residues 1-19 show a composition bias toward basic and acidic residues; sequence MAPKAEKKPASKAPAEKKP. The interval 1-38 is disordered; the sequence is MAPKAEKKPASKAPAEKKPAAKKTATSGTKKRSKTRKE. N6-acetyllysine; alternate occurs at positions 7 and 8. Residues Lys-7 and Lys-8 each participate in a glycyl lysine isopeptide (Lys-Gly) (interchain with G-Cter in SUMO); alternate cross-link. Position 11 is a phosphoserine (Ser-11). Lys-12 is modified (N6-acetyllysine). Lys-17 carries the post-translational modification N6-acetyllysine; alternate. Residue Lys-17 forms a Glycyl lysine isopeptide (Lys-Gly) (interchain with G-Cter in SUMO); alternate linkage. Lys-18 is covalently cross-linked (Glycyl lysine isopeptide (Lys-Gly) (interchain with G-Cter in SUMO)). A Glycyl lysine isopeptide (Lys-Gly) (interchain with G-Cter in ubiquitin) cross-link involves residue Lys-123.

The protein belongs to the histone H2B family. As to quaternary structure, the nucleosome is a histone octamer containing two molecules each of H2A, H2B, H3 and H4 assembled in one H3-H4 heterotetramer and two H2A-H2B heterodimers. The octamer wraps approximately 147 bp of DNA. Post-translationally, monoubiquitinated by the UBC2-BRE1 complex to form H2BK123ub1. H2BK123ub1 gives a specific tag for epigenetic transcriptional activation and is also prerequisite for H3K4me and H3K79me formation. H2BK123ub1 also modulates the formation of double-strand breaks during meiosis and is a prerequisite for DNA-damage checkpoint activation. In terms of processing, phosphorylated by STE20 to form H2BS10ph during progression through meiotic prophase. May be correlated with chromosome condensation. Acetylated by GCN5 to form H2BK11ac and H2BK16ac. H2BK16ac can also be formed by ESA1. Acetylation of N-terminal lysines and particularly formation of H2BK11acK16ac has a positive effect on transcription. Post-translationally, sumoylation to form H2BK6su or H2BK7su, and probably also H2BK16su or H2BK17su, occurs preferentially near the telomeres and represses gene transcription.

The protein localises to the nucleus. It is found in the chromosome. Core component of nucleosome. Nucleosomes wrap and compact DNA into chromatin, limiting DNA accessibility to the cellular machineries which require DNA as a template. Histones thereby play a central role in transcription regulation, DNA repair, DNA replication and chromosomal stability. DNA accessibility is regulated via a complex set of post-translational modifications of histones, also called histone code, and nucleosome remodeling. In Debaryomyces hansenii (strain ATCC 36239 / CBS 767 / BCRC 21394 / JCM 1990 / NBRC 0083 / IGC 2968) (Yeast), this protein is Histone H2B.2 (HTB2).